The following is a 355-amino-acid chain: Myricetin 7/4'-O-methyltransferase 2 (355 aa).

Asp221 is an S-adenosyl-L-methionine binding site. Residue His259 is the Proton acceptor of the active site.

The protein belongs to the class I-like SAM-binding methyltransferase superfamily. Cation-independent O-methyltransferase family. In terms of assembly, homodimer. As to expression, mainly expressed in leaves secreting glandular trichomes types 1 and 4 and, to a lesser extent, in storage trichomes type 6.

It catalyses the reaction quercetin + S-adenosyl-L-methionine = rhamnetin + S-adenosyl-L-homocysteine + H(+). The enzyme catalyses kaempferol + S-adenosyl-L-methionine = kaempferide + S-adenosyl-L-homocysteine + H(+). It carries out the reaction myricetin + S-adenosyl-L-methionine = 7-O-methylmyricetin + S-adenosyl-L-homocysteine + H(+). The catalysed reaction is kaempferide + S-adenosyl-L-methionine = 7,4'-O-dimethylkaempferol + S-adenosyl-L-homocysteine + H(+). It catalyses the reaction isorhamnetin + S-adenosyl-L-methionine = 3',4'-O-dimethylquercetin + S-adenosyl-L-homocysteine + 2 H(+). The enzyme catalyses 3',4',5,7-tetrahydroxy-3-methoxyflavone + S-adenosyl-L-methionine = 3',4',5-trihydroxy-3,7-dimethoxyflavone + S-adenosyl-L-homocysteine + H(+). It carries out the reaction rhamnetin + S-adenosyl-L-methionine = 7,4'-O-dimethylquercetin + S-adenosyl-L-homocysteine + H(+). The catalysed reaction is syringetin + S-adenosyl-L-methionine = 7,3',5'-O-trimethylmyricetin + S-adenosyl-L-homocysteine + H(+). It catalyses the reaction 3',4',5'-O-trimethylmyricetin + S-adenosyl-L-methionine = 7,3',4',5'-O-tetramethylmyricetin + S-adenosyl-L-homocysteine. It functions in the pathway flavonoid metabolism. Functionally, flavonoid 7/4'-O-methyltransferase involved in the biosynthesis of polymethoxylated flavonoids natural products such as myricetin derivatives, aroma compounds possessing antioxidant properties and exhibiting pharmacological activities such as anti-carcinogen, anti-viral, anti-thrombotic, anti-diabetic, anti-atherosclerotic, and anti-inflammatory effects. Catalyzes S-adenosylmethionine-dependent regioselective 7/4'-O-methylation of flavonoids; active on various hydroxylated flavonoid substrates, including myricetin, quercetin and kaempferol. Mediates the formation of 4'-methyl derivatives from kaempferol, 3'-methyl quercetin (isorhamnetin), 7-methyl quercetin (rhamnetin) and 3'-methyl myricetin, producing 4'-methyl kaempferol (kaempferide), 3',4'-dimethyl quercetin (4'-O-methyl isorhamnetin), 7,4'-dimethyl quercetin (4'-O-methyl rhamnetin, rhamnacene) and 3',4'-dimethyl myricetin, respectively. Triggers the 7-O-methylation of quercetin, myricetin, 4'-methyl kaempferol (kaempferide), 3-methyl quercetin, 3',5'-dimethyl myricetin (syringetin) and 3',4',5'-trimethyl myricetin, thus leading to production of 7-methyl quercetin (rhamnetin), 7-methyl myricetin, 7,4'-dimethyl kaempferol (7-O-methyl kaempferide), 3,7-dimethyl quercetin, 7,3',5'-trimethyl myricetin (7-O-methyl syringetin) and 7,3',4',5'-tetramethyl myricetin, respectively. This chain is Myricetin 7/4'-O-methyltransferase 2, found in Solanum habrochaites (Wild tomato).